A 187-amino-acid polypeptide reads, in one-letter code: MATTLTLSEAVTALQQGDVIAYPTEAVWGLGCDPRQETAVHTLLNIKQRASGKGLILVTAELNTLQDWLDLDTLSPERLHEVQASWPGPHTWVLPASTRAPHWITGHHNGLAVRISAHPLVSALCRAWNMALISTSANVAGQPPARRREDLDPSLLPHLAGIVDGPTGGLAQPTSIRDARSGHILRL.

The region spanning 4-187 is the YrdC-like domain; it reads TLTLSEAVTA…DARSGHILRL (184 aa).

Belongs to the SUA5 family. TsaC subfamily.

It is found in the cytoplasm. The enzyme catalyses L-threonine + hydrogencarbonate + ATP = L-threonylcarbamoyladenylate + diphosphate + H2O. Required for the formation of a threonylcarbamoyl group on adenosine at position 37 (t(6)A37) in tRNAs that read codons beginning with adenine. Catalyzes the conversion of L-threonine, HCO(3)(-)/CO(2) and ATP to give threonylcarbamoyl-AMP (TC-AMP) as the acyladenylate intermediate, with the release of diphosphate. This chain is Threonylcarbamoyl-AMP synthase, found in Xylella fastidiosa (strain M23).